The chain runs to 205 residues: Protein Rcp (205 aa).

This sequence belongs to the NAD(P)-dependent epimerase/dehydratase family.

This is Protein Rcp (rcp) from Vibrio cholerae serotype O1 (strain ATCC 39315 / El Tor Inaba N16961).